The following is a 357-amino-acid chain: EGF-like domain-containing protein 2 (357 aa).

The N-terminal stretch at 1–20 (MPPSLSHLFLLSTFASLALC) is a signal peptide. EGF-like domains lie at 21 to 55 (SFYC…FNCG) and 61 to 93 (ISAA…PTCQ). Intrachain disulfides connect Cys24–Cys37, Cys31–Cys43, Cys45–Cys54, Cys65–Cys75, Cys69–Cys81, and Cys83–Cys92.

As to expression, prismatic layer of shell (at protein level). Expressed primarily in the mantle with highest level in the mantle edge and lower level in the mantle pallium.

It localises to the secreted. The protein is EGF-like domain-containing protein 2 of Pinctada maxima (Silver-lipped pearl oyster).